Reading from the N-terminus, the 482-residue chain is MTSGTEQATLNTEENGSDSDHLSKEPIAMPALDWDGPTDSNNPRNFSTPKKVFITACLASLVCISTFGSSVMSPASGQLIHEFGISKELSILATALYVLGFAVGPLLFGPASEVLGRKYPLSVGVFLFAIFSIPIAVAKNVATIFVCRFLCGTFAAAPLAIAGGGLADLWEPLSRGIAVAGFASATFLGPVLGPLVGGFVTKSHLGWRWTQWLSIIFSLVFLAIYFVFCPETYSPIVLARLAKKRGQMPPGGKVDFKQLAKVYMLRPFIMLVQEPILALLTLYMGFIYGFLYLCFEAFPIAFEEHRGWDIGIGSLPFLSITVGVLIGVVIIIVHTMTRMRRKLETVGDAPEERLVPMMIGSILMPAGIFWFAWTSNTSLPWAPQVVSGVFIGCGILLIFLQGMNYIIDVYKVMANSAISINAMFRGLLGAGFPLFASYMFDNLGVPWAMSLLGFLCVALVPVPFLFFIYGERIRKWSKFTAH.

Residues 1-14 (MTSGTEQATLNTEE) show a composition bias toward polar residues. The interval 1–22 (MTSGTEQATLNTEENGSDSDHL) is disordered. Asn15 and Asn45 each carry an N-linked (GlcNAc...) asparagine glycan. The next 9 helical transmembrane spans lie at 52 to 72 (VFIT…SSVM), 89 to 109 (LSIL…LLFG), 125 to 145 (VFLF…ATIF), 149 to 169 (FLCG…LADL), 176 to 196 (GIAV…GPLV), 209 to 229 (WTQW…FVFC), 275 to 295 (PILA…YLCF), 312 to 332 (IGSL…VIII), and 354 to 374 (LVPM…FAWT). N-linked (GlcNAc...) asparagine glycosylation is present at Asn376. 3 helical membrane-spanning segments follow: residues 379–399 (LPWA…LLIF), 427–447 (LLGA…GVPW), and 448–468 (AMSL…LFFI).

It belongs to the major facilitator superfamily. CAR1 family.

The protein resides in the membrane. In terms of biological role, MFS-type transporter; part of the tra gene cluster that produces terrestric acid. The clavatol biosynthesis cluster cla and the terrestric acid cluster tra are both involved in the production of peniphenones and penilactones. This is MFS-type transporter traF from Penicillium crustosum (Blue mold fungus).